Consider the following 173-residue polypeptide: Crossover junction endodeoxyribonuclease RuvC (173 aa).

Active-site residues include D8, E69, and D141. D8, E69, and D141 together coordinate Mg(2+).

It belongs to the RuvC family. In terms of assembly, homodimer which binds Holliday junction (HJ) DNA. The HJ becomes 2-fold symmetrical on binding to RuvC with unstacked arms; it has a different conformation from HJ DNA in complex with RuvA. In the full resolvosome a probable DNA-RuvA(4)-RuvB(12)-RuvC(2) complex forms which resolves the HJ. Mg(2+) is required as a cofactor.

It localises to the cytoplasm. It carries out the reaction Endonucleolytic cleavage at a junction such as a reciprocal single-stranded crossover between two homologous DNA duplexes (Holliday junction).. In terms of biological role, the RuvA-RuvB-RuvC complex processes Holliday junction (HJ) DNA during genetic recombination and DNA repair. Endonuclease that resolves HJ intermediates. Cleaves cruciform DNA by making single-stranded nicks across the HJ at symmetrical positions within the homologous arms, yielding a 5'-phosphate and a 3'-hydroxyl group; requires a central core of homology in the junction. The consensus cleavage sequence is 5'-(A/T)TT(C/G)-3'. Cleavage occurs on the 3'-side of the TT dinucleotide at the point of strand exchange. HJ branch migration catalyzed by RuvA-RuvB allows RuvC to scan DNA until it finds its consensus sequence, where it cleaves and resolves the cruciform DNA. The protein is Crossover junction endodeoxyribonuclease RuvC of Stenotrophomonas maltophilia (strain R551-3).